Consider the following 298-residue polypeptide: Ribosomal protein L11 methyltransferase (298 aa).

T139, G163, D185, and N232 together coordinate S-adenosyl-L-methionine.

This sequence belongs to the methyltransferase superfamily. PrmA family.

The protein resides in the cytoplasm. The catalysed reaction is L-lysyl-[protein] + 3 S-adenosyl-L-methionine = N(6),N(6),N(6)-trimethyl-L-lysyl-[protein] + 3 S-adenosyl-L-homocysteine + 3 H(+). In terms of biological role, methylates ribosomal protein L11. This is Ribosomal protein L11 methyltransferase from Microcystis aeruginosa (strain NIES-843 / IAM M-2473).